A 130-amino-acid polypeptide reads, in one-letter code: Capsid protein (130 aa).

Residues 32-105 are viral RNA-binding; the sequence is EWISSNSRSQ…FATNSDCELI (74 aa).

The protein belongs to the Leviviricetes capsid protein family. Homodimer. The capsid proteins form dimers that assemble by group of 5. Twelve such pentamers are linked together with free dimers. The homodimers binds to the viral RNA via an operator hairpin, but also to many other RNA sequences in the viral genome; this interaction probably shifts the virus from the replicative to the assembly phase and ensures specific encapsidation of the viral genome.

The protein localises to the virion. In terms of biological role, capsid protein self-assembles to form an icosahedral capsid with a T=3 symmetry, about 26 nm in diameter, and consisting of 89 capsid proteins dimers (178 capsid proteins). Involved in viral genome encapsidation through the interaction between a capsid protein dimer and the multiple packaging signals present in the RNA genome. The capsid also contains 1 copy of the A2 maturation protein. Acts as a translational repressor of viral replicase synthesis late in infection. This latter function is the result of capsid protein interaction with an RNA hairpin which contains the replicase ribosome-binding site. The protein is Capsid protein of Enterobacteria phage ZR (Bacteriophage ZR).